The sequence spans 639 residues: Extracellular metalloproteinase 9 (639 aa).

An N-terminal signal peptide occupies residues 1 to 19; the sequence is MHGLLLAAGLLSLPLRALG. The propeptide occupies 20-250; that stretch reads HPNPNPQMHT…IHGVVDYVAD (231 aa). N278 is a glycosylation site (N-linked (GlcNAc...) asparagine). The segment at 293–312 is disordered; it reads PTTRGNNGIAQDNPSGGNQY. H434 provides a ligand contact to Zn(2+). E435 is a catalytic residue. Residue H438 participates in Zn(2+) binding.

The protein belongs to the peptidase M36 family. It depends on Zn(2+) as a cofactor.

The protein localises to the secreted. Functionally, secreted metalloproteinase that allows assimilation of proteinaceous substrates and probably acts as a virulence factor. The sequence is that of Extracellular metalloproteinase 9 (MEP9) from Coccidioides posadasii (strain C735) (Valley fever fungus).